Reading from the N-terminus, the 198-residue chain is MAQPELLWAAAGLMLLGVAVSACVRCQLYATKRGKDGSQGSRLERPQRFEVIRSCSAVTRRPERIKEPEHLARKAPEELSTSCHVGFESSAEPRYQNFLTEDCLHEDAAYVEPVPLDYYSHNRFFSPPNDEDSHSYQNVIIGDPCSSELDDAEDYENSTAIEVWKVQQAKAMLYAESQDEEPDYVNTDPTIDAVVLSK.

Residues 1-4 (MAQP) lie on the Extracellular side of the membrane. The helical; Signal-anchor for type III membrane protein transmembrane segment at 5 to 24 (ELLWAAAGLMLLGVAVSACV) threads the bilayer. Residues cysteine 23 and cysteine 26 are each lipidated (S-palmitoyl cysteine). Topologically, residues 25-198 (RCQLYATKRG…PTIDAVVLSK (174 aa)) are cytoplasmic. 3 positions are modified to phosphotyrosine: tyrosine 136, tyrosine 155, and tyrosine 184.

In terms of assembly, when phosphorylated, interacts with GRB2. In terms of processing, phosphorylated on tyrosines following cross-linking of BCR; which induces the recruitment of GRB2.

It localises to the cell membrane. Functionally, involved in BCR (B-cell antigen receptor)-mediated signaling in B-cells. May also be involved in FCER1 (high affinity immunoglobulin epsilon receptor)-mediated signaling in mast cells and FCGR1 (high affinity immunoglobulin gamma Fc receptor I)-mediated signaling in myeloid cells. Couples activation of these receptors and their associated kinases with distal intracellular events such as calcium mobilization through the recruitment of GRB2. The chain is Linker for activation of T-cells family member 2 (LAT2) from Gallus gallus (Chicken).